The sequence spans 209 residues: UPF0174 protein jhp_1493 (209 aa).

It belongs to the UPF0174 family.

This Helicobacter pylori (strain J99 / ATCC 700824) (Campylobacter pylori J99) protein is UPF0174 protein jhp_1493.